Consider the following 610-residue polypeptide: Threonine--tRNA ligase (610 aa).

The tract at residues 1–29 (MANHDQQTVSSAAATTSASPSPVVLPKTS) is disordered. The segment covering 8–24 (TVSSAAATTSASPSPVV) has biased composition (low complexity). The interval 209–502 (DHRRIGKDLD…MTENYAGDYP (294 aa)) is catalytic. Positions 302, 353, and 479 each coordinate Zn(2+).

It belongs to the class-II aminoacyl-tRNA synthetase family. In terms of assembly, homodimer. It depends on Zn(2+) as a cofactor.

The protein resides in the cytoplasm. The enzyme catalyses tRNA(Thr) + L-threonine + ATP = L-threonyl-tRNA(Thr) + AMP + diphosphate + H(+). Catalyzes the attachment of threonine to tRNA(Thr) in a two-step reaction: L-threonine is first activated by ATP to form Thr-AMP and then transferred to the acceptor end of tRNA(Thr). Also edits incorrectly charged L-seryl-tRNA(Thr). The protein is Threonine--tRNA ligase of Synechococcus sp. (strain WH7803).